Consider the following 134-residue polypeptide: UPF0412 protein YaaI (134 aa).

Positions 1 to 23 (MKSVFTISASLAISLMLCCTAQA) are cleaved as a signal peptide.

Belongs to the UPF0412 family.

The chain is UPF0412 protein YaaI from Escherichia coli (strain ATCC 8739 / DSM 1576 / NBRC 3972 / NCIMB 8545 / WDCM 00012 / Crooks).